We begin with the raw amino-acid sequence, 1295 residues long: MMEILRGSPALSAFRINKLLARFQAARLLVHTIYAEYVHFADLNAPLNDDEHAQLERLLKYGPALASHAPQGKLLLVTPRPGTISPWSSKATDIAHNCGLQQVNRLERGVAYYIEAGTLTNEQWQQVTAELHDRMMETVFFALDDAEQLFAHHQPTPVTSVDLLGQGRQALIDANLRLGLALAEDEIDYLQDAFTRLGRNPNDIELYMFAQANSEHCRHKIFNADWVIDGEQQPKSLFKMIKNTFETTPDHVLSAYKDNAAVMEGSEVGRYFADHETGRYDFHQEPAHILMKVETHNHPTAISPWPGAATGSGGEIRDEGATGRGAKPKAGLVGFSVSNLRIPGFEQPWEEDFGKPERIVTALDIMTEGPLGGAAFNNEFGRPALNGYFRTYEEKVNSHNGEELRGYHKPIMLAGGIGNIRADHVQKGEINVGAKLVVLGGPAMNIGLGGGAASSMASGQSDADLDFASVQRDNPEMERRCQEVIDRCWQLGDANPILFIHDVGAGGLSNAMPELVSDGGRGGKFELRDILSDEPGMSPLEIWCNESQERYVLAVAADQLPLFDELCKRERAPYAVIGEATEELHLSLHDRHFDNQPIDLPLDVLLGKTPKMTRDVQTLKAKGDALAREGITIADAVKRVLHLPTVAEKTFLVTIGDRSVTGMVARDQMVGPWQVPVANCAVTTASLDSYYGEAMAIGERAPVALLDFAASARLAVGEALTNIAATQIGDIKRIKLSANWMAAAGHPGEDAGLYEAVKAVGEELCPALGLTIPVGKDSMSMKTRWQEGNEEREMTSPLSLVISAFARVEDVRHTITPQLSTEDNALLLIDLGKGNNALGATALAQVYRQLGDKPADVRDVAQLKGFYDAIQALVAQRKLLAYHDRSDGGLLVTLAEMAFAGHCGIDADIATLGDDRLAALFNEELGAVIQVRAADREAVEAVLAQHGLADCVHYVGQAVSGDRFVITANGQTVFSESRTTLRVWWAETTWQMQRLRDNPECADQEHQAKSNDADPGLNVKLSFDINEDVAAPFIATGARPKVAVLREQGVNSHVEMAAAFHRAGFDAIDVHMSDLLAGRTGLEGFHVLVACGGFSYGDVLGAGEGWAKSILFNDRVRDEFATFFHRPQTLALGVCNGCQMMSNLRELIPGSELWPRFVRNTSDRFEARFSLVEVTQSPSLLLQGMVGSQMPIAVSHGEGRVEVRDAAHLAALESKGLVALRYVDNFGKVTETYPANPNGSPNGITAVTTESGRVTIMMPHPERVFRTVSNSWHPENWGEDGPWMRIFRNARKQLG.

Positions 305-327 (WPGAATGSGGEIRDEGATGRGAK) are disordered. ATP is bound by residues 307–318 (GAATGSGGEIRD) and Ala678. Glu718, Asn722, and Asp884 together coordinate Mg(2+). Ser886 lines the ATP pocket. One can recognise a Glutamine amidotransferase type-1 domain in the interval 1042 to 1295 (VAVLREQGVN…IFRNARKQLG (254 aa)). Cys1135 (nucleophile) is an active-site residue. Active-site residues include His1260 and Glu1262.

In the N-terminal section; belongs to the FGAMS family. As to quaternary structure, monomer.

The protein resides in the cytoplasm. It catalyses the reaction N(2)-formyl-N(1)-(5-phospho-beta-D-ribosyl)glycinamide + L-glutamine + ATP + H2O = 2-formamido-N(1)-(5-O-phospho-beta-D-ribosyl)acetamidine + L-glutamate + ADP + phosphate + H(+). It functions in the pathway purine metabolism; IMP biosynthesis via de novo pathway; 5-amino-1-(5-phospho-D-ribosyl)imidazole from N(2)-formyl-N(1)-(5-phospho-D-ribosyl)glycinamide: step 1/2. In terms of biological role, phosphoribosylformylglycinamidine synthase involved in the purines biosynthetic pathway. Catalyzes the ATP-dependent conversion of formylglycinamide ribonucleotide (FGAR) and glutamine to yield formylglycinamidine ribonucleotide (FGAM) and glutamate. The sequence is that of Phosphoribosylformylglycinamidine synthase from Escherichia coli (strain UTI89 / UPEC).